Consider the following 113-residue polypeptide: Pro-corazonin (113 aa).

Positions 1–19 (MATNITMFLIVITLTSVAA) are cleaved as a signal peptide. The residue at position 20 (Gln-20) is a Pyrrolidone carboxylic acid. At Asn-30 the chain carries Asparagine amide. The disordered stretch occupies residues 74 to 96 (LGPCDTSKTRSTTNPSDTNTSAV). Residues 82–96 (TRSTTNPSDTNTSAV) show a composition bias toward polar residues.

Belongs to the corazonin family. As to expression, four pairs of lateral neurosecretory cells in the brains of late instar larvae, pupae and adults.

It is found in the secreted. Cardioactive peptide. Corazonin is probably involved in the physiological regulation of the heart beat. This Galleria mellonella (Greater wax moth) protein is Pro-corazonin.